The following is a 427-amino-acid chain: MGSVRTNRYSIVSSEEDGMKLATLAVANGFGNGKSKVHTRQQCRSRFVKKDGHCNVQFINVGEKGQRYLADIFTTCVDIRWRWMLVIFCLAFVLSWLFFGCVFWLIALLHGDLDASKESKACVSEVNSFTAAFLFSIETQTTIGYGFRCVTDECPIAVFMVVFQSIVGCIIDAFIIGAVMAKMAKPKKRNETLVFSHNAVIAMRDGKLCLMWRVGNLRKSHLVEAHVRAQLLKSRITSEGEYIPLDQIDINVGFDSGIDRIFLVSPITIVHEIDEDSPLYDLSKQDIDNADFEIVVILEGMVEATAMTTQCRSSYLANEILWGHRYEPVLFEEKHYYKVDYSRFHKTYEVPNTPLCSARDLAEKKYILSNANSFCYENEVALTSKEEDDSENGVPESTSTDTPPDIDLHNQASVPLEPRPLRRESEI.

The Cytoplasmic segment spans residues 1-81; sequence MGSVRTNRYS…IFTTCVDIRW (81 aa). An S-nitrosocysteine modification is found at Cys-76. A helical transmembrane segment spans residues 82 to 106; that stretch reads RWMLVIFCLAFVLSWLFFGCVFWLI. Residues 107–128 are Extracellular-facing; that stretch reads ALLHGDLDASKESKACVSEVNS. An intramembrane region (helical; Pore-forming) is located at residues 129–140; that stretch reads FTAAFLFSIETQ. The pore-forming intramembrane region spans 141 to 147; it reads TTIGYGF. Positions 142–147 match the Selectivity filter motif; it reads TIGYGF. Topologically, residues 148 to 156 are extracellular; that stretch reads RCVTDECPI. Residues 157–178 traverse the membrane as a helical segment; it reads AVFMVVFQSIVGCIIDAFIIGA. At 179–427 the chain is on the cytoplasmic side; the sequence is VMAKMAKPKK…PRPLRRESEI (249 aa). Positions 181–208 are polyphosphoinositide (PIP2)-binding; that stretch reads AKMAKPKKRNETLVFSHNAVIAMRDGKL. Residues 384 to 427 are disordered; that stretch reads SKEEDDSENGVPESTSTDTPPDIDLHNQASVPLEPRPLRRESEI. The PDZ-binding motif lies at 425 to 427; the sequence is SEI.

The protein belongs to the inward rectifier-type potassium channel (TC 1.A.2.1) family. KCNJ2 subfamily. In terms of assembly, homotetramer. Homomultimeric and heteromultimeric association with KCNJ4/Kir2.3. Can form heteromeric channels with Kir2.6/KCNJ18. Associates, via its PDZ-recognition domain, with a complex containing LIN7A, LIN7B, LIN7C, DLG1, CASK and APBA1. Post-translationally, S-nitrosylation increases the open probability and inward rectifying currents.

It localises to the cell membrane. The protein resides in the sarcolemma. It is found in the T-tubule. The catalysed reaction is K(+)(in) = K(+)(out). Activated by phosphatidylinositol 4,5 biphosphate (PtdIns(4,5)P2). Functionally, inward rectifier potassium channels are characterized by a greater tendency to allow potassium to flow into the cell rather than out of it. Their voltage dependence is regulated by the concentration of extracellular potassium; as external potassium is raised, the voltage range of the channel opening shifts to more positive voltages. The inward rectification is mainly due to the blockage of outward current by internal magnesium. Can be blocked by extracellular barium and cesium. Probably participates in establishing action potential waveform and excitability of neuronal and muscle tissues. The sequence is that of Inward rectifier potassium channel 2 (KCNJ2) from Sus scrofa (Pig).